An 88-amino-acid polypeptide reads, in one-letter code: Small ribosomal subunit protein uS17 (88 aa).

This sequence belongs to the universal ribosomal protein uS17 family. As to quaternary structure, part of the 30S ribosomal subunit.

In terms of biological role, one of the primary rRNA binding proteins, it binds specifically to the 5'-end of 16S ribosomal RNA. This chain is Small ribosomal subunit protein uS17, found in Nitrosospira multiformis (strain ATCC 25196 / NCIMB 11849 / C 71).